The chain runs to 1151 residues: Syntaxin-binding protein 5 (1151 aa).

Residues 14-34 (TAGSSSASQQQQQQHPPGNRE) form a disordered region. The span at 17-27 (SSSASQQQQQQ) shows a compositional bias: low complexity. WD repeat units follow at residues 61–94 (SALA…CYCQ), 101–140 (VIQL…SLKF), 145–181 (VTFC…GYVI), 200–234 (HISD…DYRY), 240–272 (IHSV…PAKP), 294–336 (PILK…KSTA), 344–378 (IVDF…LIDL), 400–477 (TCCE…YKLK), 505–619 (QIIS…ELVI), and 633–695 (TSLA…SGAG). Disordered regions lie at residues 555-595 (ETPE…GLRD) and 674-729 (SNDP…EQKM). Position 692 is a phosphoserine (serine 692). A compositionally biased stretch (low complexity) spans 712–721 (SPTSGSSSPH). Position 723 is a phosphoserine; by PKA (serine 723). Serine 759 is modified (phosphoserine). Threonine 762 is subject to Phosphothreonine. Serine 782 carries the post-translational modification Phosphoserine. The residue at position 784 (threonine 784) is a Phosphothreonine. A Phosphoserine modification is found at serine 785. 4 WD repeats span residues 794-851 (ISAL…SGTI), 860-934 (RMAF…QNCA), 939-983 (ITET…LDVY), and 997-1020 (CFTN…TYSQ). Residues 881 to 892 (HNVPEEKDEKEK) are compositionally biased toward basic and acidic residues. A disordered region spans residues 881-906 (HNVPEEKDEKEKLKKRRPVSVSPSSS). 2 positions are modified to phosphoserine: serine 900 and serine 902. At threonine 1039 the chain carries Phosphothreonine. Residues serine 1058 and serine 1131 each carry the phosphoserine modification. In terms of domain architecture, v-SNARE coiled-coil homology spans 1086–1146 (GIEGVKGAAS…HEIMLKYKDK (61 aa)).

The protein belongs to the WD repeat L(2)GL family. Interacts with STX1A and STX1B via its v-SNARE homology domain. Part of a complex that contains STX1, STXBP5, SNAP25 and SYT1. Part of a complex that contains STXBP5, STX4A and SNAP23.

It is found in the cytoplasm. The protein localises to the cell membrane. It localises to the cytoplasmic vesicle membrane. The protein resides in the cytoplasmic vesicle. Its subcellular location is the secretory vesicle. It is found in the synaptic vesicle. The protein localises to the synapse. Functionally, plays a regulatory role in calcium-dependent exocytosis and neurotransmitter release. Inhibits membrane fusion between transport vesicles and the plasma membrane. May modulate the assembly of trans-SNARE complexes between transport vesicles and the plasma membrane. Inhibits translocation of GLUT4 from intracellular vesicles to the plasma membrane. Competes with STXBP1 for STX1 binding. The protein is Syntaxin-binding protein 5 (STXBP5) of Homo sapiens (Human).